The chain runs to 477 residues: UDP-N-acetylmuramate--L-alanine ligase (477 aa).

Residue 120–126 (GSHGKTT) coordinates ATP.

This sequence belongs to the MurCDEF family.

The protein localises to the cytoplasm. It carries out the reaction UDP-N-acetyl-alpha-D-muramate + L-alanine + ATP = UDP-N-acetyl-alpha-D-muramoyl-L-alanine + ADP + phosphate + H(+). It participates in cell wall biogenesis; peptidoglycan biosynthesis. Functionally, cell wall formation. In Rickettsia canadensis (strain McKiel), this protein is UDP-N-acetylmuramate--L-alanine ligase.